The following is a 397-amino-acid chain: uncharacterized protein (397 aa).

This is an uncharacterized protein from Thermotoga maritima (strain ATCC 43589 / DSM 3109 / JCM 10099 / NBRC 100826 / MSB8).